The following is a 192-amino-acid chain: Putative 3-methyladenine DNA glycosylase (192 aa).

The protein belongs to the DNA glycosylase MPG family.

The chain is Putative 3-methyladenine DNA glycosylase from Bdellovibrio bacteriovorus (strain ATCC 15356 / DSM 50701 / NCIMB 9529 / HD100).